A 352-amino-acid polypeptide reads, in one-letter code: MASSINGRKPSEIFKAQALLYKHIYAFIDSMSLKWAVEMNIPNIIQNHGKPISLSNLVSILQVPSSKIGNVRRLMRYLAHNGFFEIITKEEESYALTVASELLVRGSDLCLAPMVECVLDPTLSGSYHELKKWIYEEDLTLFGVTLGSGFWDFLDKNPEYNTSFNDAMASDSKLINLALRDCDFVFDGLESIVDVGGGTGTTAKIICETFPKLKCIVFDRPQVVENLSGSNNLTYVGGDMFTSIPNADAVLLKYILHNWTDKDCLRILKKCKEAVTNDGKRGKVTIIDMVIDKKKDENQVTQIKLLMDVNMACLNGKERNEEEWKKLFIEAGFQHYKISPLTGFLSLIEIYP.

Residue 118–127 (VLDPTLSGSY) participates in substrate binding. Glycine 196, aspartate 219, aspartate 239, methionine 240, and lysine 253 together coordinate S-adenosyl-L-methionine. Histidine 257 (proton acceptor) is an active-site residue.

It belongs to the class I-like SAM-binding methyltransferase superfamily. Cation-independent O-methyltransferase family. COMT subfamily. Homodimer.

The enzyme catalyses a 7-hydroxyisoflavone + S-adenosyl-L-methionine = a 7-methoxyisoflavone + S-adenosyl-L-homocysteine + H(+). It functions in the pathway phytoalexin biosynthesis; medicarpin biosynthesis. Its function is as follows. Transfers a methyl group to 7-hydroxyls of the isoflavones daidzein, genistein and 6,7,4'-trihydroxyisoflavone. Can also methylate (+)6a-hydroxymaackiain with lower efficiency. The sequence is that of Isoflavone-7-O-methyltransferase 8 from Medicago sativa (Alfalfa).